The chain runs to 151 residues: Cytochrome c oxidase-assembly factor COX23, mitochondrial (151 aa).

A mitochondrion-targeting transit peptide spans 1–10 (MEKPSPTRRQ). The interval 1–86 (MEKPSPTRRQ…QYYPDDPENP (86 aa)) is disordered. Positions 7–18 (TRRQTSSLSTIS) are enriched in polar residues. A compositionally biased stretch (low complexity) spans 19–51 (NGMTMTNDNRDTTNTNSGSTSSNNSQPSSSSTP). Residues 101–143 (YDPCEESSKLSFQCLERNDYDRSKCQEYFDAYRECKKQWLTAR) form the CHCH domain. 2 consecutive short sequence motifs (cx9C motif) follow at residues 104 to 114 (CEESSKLSFQC) and 125 to 135 (CQEYFDAYREC). Disulfide bonds link C104-C135 and C114-C125.

Belongs to the COX23 family.

The protein resides in the cytoplasm. The protein localises to the mitochondrion intermembrane space. Functionally, required for the assembly of cytochrome c oxidase. This is Cytochrome c oxidase-assembly factor COX23, mitochondrial (COX23) from Saccharomyces cerevisiae (strain ATCC 204508 / S288c) (Baker's yeast).